The primary structure comprises 210 residues: 23 kDa jasmonate-induced protein (210 aa).

Belongs to the jasmonate-induced protein family.

In Hordeum vulgare (Barley), this protein is 23 kDa jasmonate-induced protein.